The primary structure comprises 110 residues: Large ribosomal subunit protein uL22 (110 aa).

The protein belongs to the universal ribosomal protein uL22 family. As to quaternary structure, part of the 50S ribosomal subunit.

This protein binds specifically to 23S rRNA; its binding is stimulated by other ribosomal proteins, e.g. L4, L17, and L20. It is important during the early stages of 50S assembly. It makes multiple contacts with different domains of the 23S rRNA in the assembled 50S subunit and ribosome. In terms of biological role, the globular domain of the protein is located near the polypeptide exit tunnel on the outside of the subunit, while an extended beta-hairpin is found that lines the wall of the exit tunnel in the center of the 70S ribosome. This Pseudomonas savastanoi pv. phaseolicola (strain 1448A / Race 6) (Pseudomonas syringae pv. phaseolicola (strain 1448A / Race 6)) protein is Large ribosomal subunit protein uL22.